Here is a 170-residue protein sequence, read N- to C-terminus: Protein FAM209 (170 aa).

The signal sequence occupies residues 1–20 (MRTLLRWCLFLSLCVSCACA). Residues 56 to 76 (WLGNKWLWLFVAIMIYVMLKF) traverse the membrane as a helical segment. A disordered region spans residues 83–107 (KEQHPPGLRGCQLRSPPKKAQNISP).

Interacts with DPY19L2. Interacts with CYLC1; the interaction may be relevant for proper acrosome attachment to the nuclear envelope. Predominately expressed in testis.

It is found in the nucleus inner membrane. Required for sperm acrosome biogenesis. This chain is Protein FAM209, found in Mus musculus (Mouse).